Here is a 256-residue protein sequence, read N- to C-terminus: Acetyl-coenzyme A carboxylase carboxyl transferase subunit alpha (256 aa).

Residues 1–236 form the CoA carboxyltransferase C-terminal domain; sequence MSDVARILKE…KTAIVDELAE (236 aa).

Belongs to the AccA family. Acetyl-CoA carboxylase is a heterohexamer composed of biotin carboxyl carrier protein (AccB), biotin carboxylase (AccC) and two subunits each of ACCase subunit alpha (AccA) and ACCase subunit beta (AccD).

The protein resides in the cytoplasm. It carries out the reaction N(6)-carboxybiotinyl-L-lysyl-[protein] + acetyl-CoA = N(6)-biotinyl-L-lysyl-[protein] + malonyl-CoA. It functions in the pathway lipid metabolism; malonyl-CoA biosynthesis; malonyl-CoA from acetyl-CoA: step 1/1. Its function is as follows. Component of the acetyl coenzyme A carboxylase (ACC) complex. First, biotin carboxylase catalyzes the carboxylation of biotin on its carrier protein (BCCP) and then the CO(2) group is transferred by the carboxyltransferase to acetyl-CoA to form malonyl-CoA. This is Acetyl-coenzyme A carboxylase carboxyl transferase subunit alpha from Streptococcus thermophilus (strain ATCC BAA-491 / LMD-9).